The chain runs to 626 residues: tRNA uridine 5-carboxymethylaminomethyl modification enzyme MnmG (626 aa).

Residue 13–18 (GGGHAG) coordinates FAD. 273–287 (GPRYCPSIEDKIHRF) is a binding site for NAD(+).

It belongs to the MnmG family. In terms of assembly, homodimer. Heterotetramer of two MnmE and two MnmG subunits. The cofactor is FAD.

It localises to the cytoplasm. Its function is as follows. NAD-binding protein involved in the addition of a carboxymethylaminomethyl (cmnm) group at the wobble position (U34) of certain tRNAs, forming tRNA-cmnm(5)s(2)U34. The chain is tRNA uridine 5-carboxymethylaminomethyl modification enzyme MnmG from Acinetobacter baylyi (strain ATCC 33305 / BD413 / ADP1).